The sequence spans 359 residues: Protein Wnt-8a (359 aa).

The first 25 residues, Met-1–Ser-25, serve as a signal peptide directing secretion. Cys-55 and Cys-66 are disulfide-bonded. A glycan (N-linked (GlcNAc...) asparagine) is linked at Asn-104. Cystine bridges form between Cys-105–Cys-113, Cys-115–Cys-133, Cys-181–Cys-195, Cys-183–Cys-190, Cys-260–Cys-298, Cys-276–Cys-291, Cys-295–Cys-337, Cys-313–Cys-328, Cys-315–Cys-325, and Cys-320–Cys-321. The O-palmitoleoyl serine moiety is linked to residue Ser-187. Asn-263 and Asn-282 each carry an N-linked (GlcNAc...) asparagine glycan. Residue Asn-348 is glycosylated (N-linked (GlcNAc...) asparagine).

It belongs to the Wnt family. In terms of processing, palmitoleoylation is required for efficient binding to frizzled receptors. Depalmitoleoylation leads to Wnt signaling pathway inhibition. Post-translationally, proteolytic processing by tiki1 and tiki2 promotes oxidation and formation of large disulfide-bond oligomers, leading to inactivation of wnt8. As to expression, expressed in the margin of the pregastrula embryo destined to be the future mesoderm.

It localises to the secreted. The protein resides in the extracellular space. The protein localises to the extracellular matrix. In terms of biological role, ligand for members of the frizzled family of seven transmembrane receptors. Required for mesoderm and neural ectoderm patterning during gastrulation. Involved in axis formation during embryonic development, via activation of canonical Wnt/CTNNB1 signaling. May be involved in the specification of the spatial patterns of expression of Gsc and other regulatory genes leading to the establishment of the embryonic axis. This chain is Protein Wnt-8a (wnt8a), found in Danio rerio (Zebrafish).